Here is a 235-residue protein sequence, read N- to C-terminus: Segregation and condensation protein A (235 aa).

The protein belongs to the ScpA family. As to quaternary structure, component of a cohesin-like complex composed of ScpA, ScpB and the Smc homodimer, in which ScpA and ScpB bind to the head domain of Smc. The presence of the three proteins is required for the association of the complex with DNA.

It localises to the cytoplasm. Functionally, participates in chromosomal partition during cell division. May act via the formation of a condensin-like complex containing Smc and ScpB that pull DNA away from mid-cell into both cell halves. This is Segregation and condensation protein A from Streptococcus equi subsp. zooepidemicus (strain MGCS10565).